A 166-amino-acid polypeptide reads, in one-letter code: NADPH-dependent 7-cyano-7-deazaguanine reductase (166 aa).

Residue cysteine 57 is the Thioimide intermediate of the active site. Aspartate 64 functions as the Proton donor in the catalytic mechanism. Residues 79–81 (VES) and 98–99 (HE) contribute to the substrate site.

The protein belongs to the GTP cyclohydrolase I family. QueF type 1 subfamily.

It localises to the cytoplasm. It carries out the reaction 7-aminomethyl-7-carbaguanine + 2 NADP(+) = 7-cyano-7-deazaguanine + 2 NADPH + 3 H(+). It participates in tRNA modification; tRNA-queuosine biosynthesis. Catalyzes the NADPH-dependent reduction of 7-cyano-7-deazaguanine (preQ0) to 7-aminomethyl-7-deazaguanine (preQ1). This is NADPH-dependent 7-cyano-7-deazaguanine reductase from Staphylococcus aureus (strain JH1).